The sequence spans 355 residues: Transcription factor TCP13 (355 aa).

The interval 1–57 (MNIVSWKDANDEVAGGATTRREREVKEDQEETEVRATSGKTVIKKQPTSISSSSSSW) is disordered. A TCP domain is found at 74–132 (GKDRHSKVCTLRGLRDRRVRLSVPTAIQLYDLQERLGVDQPSKAVDWLLDAAKEEIDEL). Residues 329-355 (TNSTTTANMSRHLGSERCTSRGSDHHM) are disordered. A compositionally biased stretch (basic and acidic residues) spans 341–355 (LGSERCTSRGSDHHM).

Interacts with AHL27 and AHL29. Interacts with SPL. Interacts with KIN10; KIN11 and FLZ3. As to expression, expressed in cotyledons, particularly in the vascular region, in leaves, buds, flowers and immature siliques, and, to a lower extent, in roots.

It is found in the nucleus. Its subcellular location is the plastid. The protein localises to the chloroplast. In terms of biological role, plays a pivotal role in the control of morphogenesis of shoot organs by negatively regulating the expression of boundary-specific genes such as CUC genes, probably through the induction of miRNA (e.g. miR164). Binds to the 3'-ACC-5' repeats in the light-responsive promoter (LRP) of psbD, and activates its transcription. Participates in ovule development. The sequence is that of Transcription factor TCP13 (TCP13) from Arabidopsis thaliana (Mouse-ear cress).